The chain runs to 508 residues: Histidine ammonia-lyase (508 aa).

Residues 139–141 (ASG) constitute a cross-link (5-imidazolinone (Ala-Gly)). 2,3-didehydroalanine (Ser) is present on S140.

The protein belongs to the PAL/histidase family. Contains an active site 4-methylidene-imidazol-5-one (MIO), which is formed autocatalytically by cyclization and dehydration of residues Ala-Ser-Gly.

Its subcellular location is the cytoplasm. The catalysed reaction is L-histidine = trans-urocanate + NH4(+). It functions in the pathway amino-acid degradation; L-histidine degradation into L-glutamate; N-formimidoyl-L-glutamate from L-histidine: step 1/3. This chain is Histidine ammonia-lyase, found in Acidiphilium cryptum (strain JF-5).